The primary structure comprises 433 residues: Glutamate-1-semialdehyde 2,1-aminomutase (433 aa).

The residue at position 266 (K266) is an N6-(pyridoxal phosphate)lysine.

This sequence belongs to the class-III pyridoxal-phosphate-dependent aminotransferase family. HemL subfamily. As to quaternary structure, homodimer. The cofactor is pyridoxal 5'-phosphate.

It localises to the cytoplasm. The enzyme catalyses (S)-4-amino-5-oxopentanoate = 5-aminolevulinate. The protein operates within porphyrin-containing compound metabolism; protoporphyrin-IX biosynthesis; 5-aminolevulinate from L-glutamyl-tRNA(Glu): step 2/2. This Psychrobacter cryohalolentis (strain ATCC BAA-1226 / DSM 17306 / VKM B-2378 / K5) protein is Glutamate-1-semialdehyde 2,1-aminomutase.